A 738-amino-acid chain; its full sequence is Ent-kaurene synthase-like 1 (738 aa).

Residues aspartate 487, aspartate 491, asparagine 631, aspartate 632, and glutamate 639 each coordinate Mg(2+). Residues aspartate 487 to aspartate 491 carry the DDXXD motif motif.

The protein belongs to the terpene synthase family. Mg(2+) is required as a cofactor.

It catalyses the reaction ent-copalyl diphosphate = ent-kaur-16-ene + diphosphate. It participates in secondary metabolite biosynthesis; terpenoid biosynthesis. Its function is as follows. Diterpene cyclase involved in the biosynthesis of labdane-related diterpenoids (LRDs) natural products. Catalyzes the cyclization of ent-CDP into ent-kaurene. This is Ent-kaurene synthase-like 1 from Ricinus communis (Castor bean).